A 132-amino-acid chain; its full sequence is Ribosome-binding factor A (132 aa).

It belongs to the RbfA family. As to quaternary structure, monomer. Binds 30S ribosomal subunits, but not 50S ribosomal subunits or 70S ribosomes.

It is found in the cytoplasm. Functionally, one of several proteins that assist in the late maturation steps of the functional core of the 30S ribosomal subunit. Associates with free 30S ribosomal subunits (but not with 30S subunits that are part of 70S ribosomes or polysomes). Required for efficient processing of 16S rRNA. May interact with the 5'-terminal helix region of 16S rRNA. This chain is Ribosome-binding factor A, found in Burkholderia vietnamiensis (strain G4 / LMG 22486) (Burkholderia cepacia (strain R1808)).